Here is a 57-residue protein sequence, read N- to C-terminus: Large ribosomal subunit protein bL32c (57 aa).

Belongs to the bacterial ribosomal protein bL32 family.

Its subcellular location is the plastid. The protein resides in the chloroplast. This Liriodendron tulipifera (Tuliptree) protein is Large ribosomal subunit protein bL32c.